We begin with the raw amino-acid sequence, 356 residues long: Methylthioribose-1-phosphate isomerase (356 aa).

The active-site Proton donor is the aspartate 234.

The protein belongs to the eIF-2B alpha/beta/delta subunits family. MtnA subfamily.

The protein localises to the cytoplasm. The protein resides in the nucleus. It carries out the reaction 5-(methylsulfanyl)-alpha-D-ribose 1-phosphate = 5-(methylsulfanyl)-D-ribulose 1-phosphate. The protein operates within amino-acid biosynthesis; L-methionine biosynthesis via salvage pathway; L-methionine from S-methyl-5-thio-alpha-D-ribose 1-phosphate: step 1/6. Its function is as follows. Catalyzes the interconversion of methylthioribose-1-phosphate (MTR-1-P) into methylthioribulose-1-phosphate (MTRu-1-P). The chain is Methylthioribose-1-phosphate isomerase (mri1) from Schizosaccharomyces japonicus (strain yFS275 / FY16936) (Fission yeast).